The chain runs to 208 residues: Ribosomal RNA small subunit methyltransferase G (208 aa).

S-adenosyl-L-methionine is bound by residues G73, L78, 124-125, and R139; that span reads VE.

It belongs to the methyltransferase superfamily. RNA methyltransferase RsmG family.

The protein localises to the cytoplasm. The enzyme catalyses guanosine(527) in 16S rRNA + S-adenosyl-L-methionine = N(7)-methylguanosine(527) in 16S rRNA + S-adenosyl-L-homocysteine. Functionally, specifically methylates the N7 position of guanine in position 527 of 16S rRNA. The chain is Ribosomal RNA small subunit methyltransferase G from Aeromonas salmonicida (strain A449).